Here is a 580-residue protein sequence, read N- to C-terminus: 3-(3-hydroxy-phenyl)propionate/3-hydroxycinnamic acid hydroxylase (580 aa).

Residues 14 to 43 (DVLVVGAGPVGLTLANILGLQGIRTVVVEE) and 291 to 301 (FRRGRLLLAGD) contribute to the FAD site.

Belongs to the PheA/TfdB FAD monooxygenase family. FAD serves as cofactor.

The catalysed reaction is 3-(3-hydroxyphenyl)propanoate + NADH + O2 + H(+) = 3-(2,3-dihydroxyphenyl)propanoate + NAD(+) + H2O. The enzyme catalyses (2E)-3-(3-hydroxyphenyl)prop-2-enoate + NADH + O2 + H(+) = (2E)-3-(2,3-dihydroxyphenyl)prop-2-enoate + NAD(+) + H2O. Its pathway is aromatic compound metabolism; 3-phenylpropanoate degradation. Its function is as follows. Catalyzes the insertion of one atom of molecular oxygen into position 2 of the phenyl ring of 3-(3-hydroxyphenyl)propionate (3-HPP) and hydroxycinnamic acid (3HCI). This Mycobacterium avium (strain 104) protein is 3-(3-hydroxy-phenyl)propionate/3-hydroxycinnamic acid hydroxylase.